The sequence spans 144 residues: Large ribosomal subunit protein uL15 (144 aa).

Residues 1–53 are disordered; sequence MRLNTLSPAEGAKHAPKRLGRGIGSGLGKTGGRGHKGQKSRSGGGVRRGFEGG. Residues 21–31 show a composition bias toward gly residues; sequence RGIGSGLGKTG.

Belongs to the universal ribosomal protein uL15 family. Part of the 50S ribosomal subunit.

In terms of biological role, binds to the 23S rRNA. This chain is Large ribosomal subunit protein uL15, found in Pectobacterium carotovorum subsp. carotovorum (strain PC1).